The sequence spans 267 residues: FCS-Like Zinc finger 8 (267 aa).

Disordered regions lie at residues 1-29 (MLKK…KTTP) and 124-156 (DSPI…GSPR). Composition is skewed to polar residues over residues 15 to 28 (ETNQ…SKTT) and 126 to 141 (PISS…NSQP). An FLZ-type zinc finger spans residues 221-265 (SFLSCCCNCKKSLGPRDDIFMYRGDRAFCSSECRSIEMMMSEEND).

It belongs to the FLZ family. In terms of assembly, interacts with KIN10 and KIN11 via its FLZ-type zinc finger domain. Interacts with KINB1, KINB2, KINB3 and SNF4 via its N-terminal part. Interacts with HB21/ZHD3.

Functionally, may act as an adapter to facilitate the interaction of SnRK1 complex with effector proteins, conferring tissue- and stimulus-type specific differences in the SnRK1 regulation pathway. This is FCS-Like Zinc finger 8 from Arabidopsis thaliana (Mouse-ear cress).